Here is an 890-residue protein sequence, read N- to C-terminus: DNA mismatch repair protein MutS (890 aa).

646–653 provides a ligand contact to ATP; that stretch reads GPNMAGKS.

This sequence belongs to the DNA mismatch repair MutS family.

Its function is as follows. This protein is involved in the repair of mismatches in DNA. It is possible that it carries out the mismatch recognition step. This protein has a weak ATPase activity. The sequence is that of DNA mismatch repair protein MutS from Hyphomonas neptunium (strain ATCC 15444).